A 166-amino-acid polypeptide reads, in one-letter code: NAD(P)H-quinone oxidoreductase subunit I, chloroplastic (166 aa).

4Fe-4S ferredoxin-type domains are found at residues 55-84 and 95-124; these read GRIH…VDWK and LNYS…MTEE. 8 residues coordinate [4Fe-4S] cluster: C64, C67, C70, C74, C104, C107, C110, and C114.

Belongs to the complex I 23 kDa subunit family. As to quaternary structure, NDH is composed of at least 16 different subunits, 5 of which are encoded in the nucleus. Requires [4Fe-4S] cluster as cofactor.

The protein resides in the plastid. It localises to the chloroplast thylakoid membrane. It carries out the reaction a plastoquinone + NADH + (n+1) H(+)(in) = a plastoquinol + NAD(+) + n H(+)(out). It catalyses the reaction a plastoquinone + NADPH + (n+1) H(+)(in) = a plastoquinol + NADP(+) + n H(+)(out). NDH shuttles electrons from NAD(P)H:plastoquinone, via FMN and iron-sulfur (Fe-S) centers, to quinones in the photosynthetic chain and possibly in a chloroplast respiratory chain. The immediate electron acceptor for the enzyme in this species is believed to be plastoquinone. Couples the redox reaction to proton translocation, and thus conserves the redox energy in a proton gradient. In Polymnia canadensis (White-flowered leaf-cup), this protein is NAD(P)H-quinone oxidoreductase subunit I, chloroplastic.